The sequence spans 407 residues: Melanoma-associated antigen B6 (407 aa).

The disordered stretch occupies residues Met-1 to Glu-175. 4 stretches are compositionally biased toward polar residues: residues Thr-18–Gln-29, Asp-57–Gly-71, Pro-94–Gly-113, and Pro-136–Gly-155. The MAGE domain maps to Val-195 to Ala-394.

Expressed in testis. Not expressed in other normal tissues, but is expressed in tumors of different histological origins.

This is Melanoma-associated antigen B6 (MAGEB6) from Homo sapiens (Human).